The following is a 619-amino-acid chain: Zinc finger protein 668 (619 aa).

The residue at position 1 (Met1) is an N-acetylmethionine. Ser10 is modified (phosphoserine). The segment at 22-44 (YKCLSCTKTFPNAPRAARHAATH) adopts a C2H2-type 1 zinc-finger fold. The tract at residues 34-79 (APRAARHAATHGPADCSEEVAEVKPKPETEAKAEEASGEKVSGSAA) is disordered. A compositionally biased stretch (basic and acidic residues) spans 54–71 (AEVKPKPETEAKAEEASG). Glycyl lysine isopeptide (Lys-Gly) (interchain with G-Cter in SUMO2) cross-links involve residues Lys57, Lys59, Lys65, and Lys80. 11 C2H2-type zinc fingers span residues 84-106 (YACPLCPKAYKTAPELRSHGRSH), 112-134 (FPCPECGRRFMQPVCLRVHLASH), 140-162 (FRCAHCPKAYGALSKLKIHQRGH), 168-190 (YACADCGKSFADPSVFRKHRRTH), 196-218 (YSCERCGKAYAELKDLRNHERSH), 224-246 (FLCSECGKSFSRSSSLTCHQRIH), 252-274 (YRCPACGKGFTQLSSYQSHERTH), 280-302 (FLCPRCGRMFSDPSSFRRHQRAH), 308-330 (YHCEKCGKDFRQPADLAMHRRVH), 336-358 (FKCLQCDKTFVASWDLKRHALVH), and 364-386 (FRCEECGRAFAERASLTKHSRVH). Lys154 is covalently cross-linked (Glycyl lysine isopeptide (Lys-Gly) (interchain with G-Cter in SUMO2)). The residue at position 387 (Ser387) is a Phosphoserine. A C2H2-type 13 zinc finger spans residues 392 to 414 (FHCNACGKSFVVSSSLRKHERTH). Positions 492–513 (REAPGPLEGAGEAGGEEADEKP) are disordered. A Glycyl lysine isopeptide (Lys-Gly) (interchain with G-Cter in SUMO2) cross-link involves residue Lys512. C2H2-type zinc fingers lie at residues 516–538 (FVCRECKETFSTMTLLRRHERSH), 544–566 (FPCTQCGKSFSDRAGLRKHSRTH), and 572–594 (YTCPHCPKAFLSASDLRKHERTH).

This sequence belongs to the krueppel C2H2-type zinc-finger protein family.

Its subcellular location is the nucleus. In terms of biological role, may be involved in transcriptional regulation. May play a role in DNA repair process. This Homo sapiens (Human) protein is Zinc finger protein 668 (ZNF668).